Here is a 334-residue protein sequence, read N- to C-terminus: Holliday junction branch migration complex subunit RuvB (334 aa).

A large ATPase domain (RuvB-L) region spans residues 4–186 (ADRLIAPENP…FGITQRLEYY (183 aa)). ATP contacts are provided by residues I25, R26, G67, K70, T71, T72, 133–135 (EDY), R176, Y186, and R223. T71 contributes to the Mg(2+) binding site. Residues 187-257 (KVKDLQDIVQ…TADKALNMLD (71 aa)) form a small ATPAse domain (RuvB-S) region. The head domain (RuvB-H) stretch occupies residues 260 to 334 (AEGFDYMDRK…RAYLHFGIEK (75 aa)). 2 residues coordinate DNA: R315 and R320.

The protein belongs to the RuvB family. As to quaternary structure, homohexamer. Forms an RuvA(8)-RuvB(12)-Holliday junction (HJ) complex. HJ DNA is sandwiched between 2 RuvA tetramers; dsDNA enters through RuvA and exits via RuvB. An RuvB hexamer assembles on each DNA strand where it exits the tetramer. Each RuvB hexamer is contacted by two RuvA subunits (via domain III) on 2 adjacent RuvB subunits; this complex drives branch migration. In the full resolvosome a probable DNA-RuvA(4)-RuvB(12)-RuvC(2) complex forms which resolves the HJ.

The protein resides in the cytoplasm. The enzyme catalyses ATP + H2O = ADP + phosphate + H(+). The RuvA-RuvB-RuvC complex processes Holliday junction (HJ) DNA during genetic recombination and DNA repair, while the RuvA-RuvB complex plays an important role in the rescue of blocked DNA replication forks via replication fork reversal (RFR). RuvA specifically binds to HJ cruciform DNA, conferring on it an open structure. The RuvB hexamer acts as an ATP-dependent pump, pulling dsDNA into and through the RuvAB complex. RuvB forms 2 homohexamers on either side of HJ DNA bound by 1 or 2 RuvA tetramers; 4 subunits per hexamer contact DNA at a time. Coordinated motions by a converter formed by DNA-disengaged RuvB subunits stimulates ATP hydrolysis and nucleotide exchange. Immobilization of the converter enables RuvB to convert the ATP-contained energy into a lever motion, pulling 2 nucleotides of DNA out of the RuvA tetramer per ATP hydrolyzed, thus driving DNA branch migration. The RuvB motors rotate together with the DNA substrate, which together with the progressing nucleotide cycle form the mechanistic basis for DNA recombination by continuous HJ branch migration. Branch migration allows RuvC to scan DNA until it finds its consensus sequence, where it cleaves and resolves cruciform DNA. The sequence is that of Holliday junction branch migration complex subunit RuvB from Vibrio campbellii (strain ATCC BAA-1116).